The sequence spans 81 residues: uncharacterized protein (81 aa).

The segment at 1–58 (MPQSKQQFKRQGARQRDSKGKFVKARTGMATAPPAAVSTAAPTASTMTPTGSSTTATI) is disordered. Over residues 30–58 (ATAPPAAVSTAAPTASTMTPTGSSTTATI) the composition is skewed to low complexity.

This is an uncharacterized protein from Caenorhabditis elegans.